The sequence spans 719 residues: Pesticidal crystal protein Cry1Id (719 aa).

This sequence belongs to the delta endotoxin family.

Functionally, promotes colloidosmotic lysis by binding to the midgut epithelial cells of many lepidopteran larvae. Active on Plutella xylostella and on Bombyx mori. The chain is Pesticidal crystal protein Cry1Id (cry1Id) from Bacillus thuringiensis.